Reading from the N-terminus, the 262-residue chain is F-actin-capping protein subunit alpha (262 aa).

It belongs to the F-actin-capping protein alpha subunit family. In terms of assembly, heterodimer of an alpha and a beta subunit.

Functionally, F-actin-capping proteins bind in a Ca(2+)-independent manner to the fast growing ends of actin filaments (barbed end) thereby blocking the exchange of subunits at these ends. Unlike other capping proteins (such as gelsolin and severin), these proteins do not sever actin filaments. This chain is F-actin-capping protein subunit alpha (CAP1), found in Kluyveromyces lactis (strain ATCC 8585 / CBS 2359 / DSM 70799 / NBRC 1267 / NRRL Y-1140 / WM37) (Yeast).